A 1295-amino-acid chain; its full sequence is Serine protease sat autotransporter (1295 aa).

The signal sequence occupies residues 1-49 (MNKIYSLKYSAATGGLIAVSELAKRVSGKTNRKLVATMLSLAVAGTVNA). A Peptidase S6 domain is found at 51–300 (NIDISNVWAR…TKYNDKLVSE (250 aa)). Catalysis depends on charge relay system residues His-121, Asp-149, and Ser-256. Positions 1029 to 1295 (DINGESGAWA…AINANFRYSF (267 aa)) constitute an Autotransporter domain.

Cleaved to release the mature protein from the outer membrane.

The protein resides in the periplasm. The protein localises to the secreted. Its subcellular location is the cell surface. It localises to the cell outer membrane. Its activity is regulated as follows. Inhibited by phenylmethylsulfonyl fluoride and Pefabloc. Functionally, shows serine protease activity and displays cytophatic activity, including elongation, rounding, and detachment of a proportion of the cells from monolayer in culture. Triggers vacuolation within the cytoplasm of the human bladder and kidney cells. The protein is Serine protease sat autotransporter (sat) of Escherichia coli O6:H1 (strain CFT073 / ATCC 700928 / UPEC).